A 217-amino-acid chain; its full sequence is UPF0502 protein Sfri_1696 (217 aa).

Belongs to the UPF0502 family.

This chain is UPF0502 protein Sfri_1696, found in Shewanella frigidimarina (strain NCIMB 400).